Consider the following 545-residue polypeptide: Light-independent protochlorophyllide reductase subunit N (545 aa).

Residues cysteine 102, cysteine 127, and cysteine 187 each coordinate [4Fe-4S] cluster.

It belongs to the BchN/ChlN family. Protochlorophyllide reductase is composed of three subunits; ChlL, ChlN and ChlB. Forms a heterotetramer of two ChlB and two ChlN subunits. It depends on [4Fe-4S] cluster as a cofactor.

The protein localises to the plastid. The protein resides in the chloroplast. The enzyme catalyses chlorophyllide a + oxidized 2[4Fe-4S]-[ferredoxin] + 2 ADP + 2 phosphate = protochlorophyllide a + reduced 2[4Fe-4S]-[ferredoxin] + 2 ATP + 2 H2O. It participates in porphyrin-containing compound metabolism; chlorophyll biosynthesis (light-independent). In terms of biological role, component of the dark-operative protochlorophyllide reductase (DPOR) that uses Mg-ATP and reduced ferredoxin to reduce ring D of protochlorophyllide (Pchlide) to form chlorophyllide a (Chlide). This reaction is light-independent. The NB-protein (ChlN-ChlB) is the catalytic component of the complex. This Chlamydomonas reinhardtii (Chlamydomonas smithii) protein is Light-independent protochlorophyllide reductase subunit N.